The sequence spans 365 residues: Phosphatidylcholine:ceramide cholinephosphotransferase 2 (365 aa).

Basic and acidic residues predominate over residues 1–14 (MDIIETAKLEEHLE). Residues 1–52 (MDIIETAKLEEHLENQPSDPTNTYTRPTEPVEEENKNGNGKPKSLSSGLRKG) form a disordered region. Residues 15–26 (NQPSDPTNTYTR) are compositionally biased toward polar residues. The next 5 membrane-spanning stretches (helical) occupy residues 80 to 100 (GIAF…ITVV), 128 to 148 (FSVS…QWLF), 159 to 179 (FCFI…VTTL), 218 to 240 (HILC…YLFI), and 248 to 268 (FWWY…CILV). Histidine 229 is an active-site residue. Active-site residues include histidine 272 and aspartate 276. Residues 273–290 (YTVDVIIAYYITTRLFWW) form a helical membrane-spanning segment. The Cytoplasmic portion of the chain corresponds to 291–365 (YHSMANEKNL…KIGEDNEKST (75 aa)). S-palmitoyl cysteine attachment occurs at residues cysteine 331, cysteine 332, cysteine 343, and cysteine 348.

The protein belongs to the sphingomyelin synthase family. In terms of processing, palmitoylated on Cys-331, Cys-332, Cys-343 and Cys-348; which plays an important role in plasma membrane localization.

Its subcellular location is the cell membrane. It is found in the golgi apparatus membrane. It carries out the reaction an N-acylsphing-4-enine + a 1,2-diacyl-sn-glycero-3-phosphocholine = a sphingomyelin + a 1,2-diacyl-sn-glycerol. The catalysed reaction is an N-acylsphinganine + a 1,2-diacyl-sn-glycero-3-phosphocholine = an N-acylsphinganine-1-phosphocholine + a 1,2-diacyl-sn-glycerol. It catalyses the reaction an N-acyl-(4R)-4-hydroxysphinganine + a 1,2-diacyl-sn-glycero-3-phosphocholine = an N-acyl-(4R)-4-hydroxysphinganine-phosphocholine + a 1,2-diacyl-sn-glycerol. The enzyme catalyses an N-acylsphing-4-enine + a 1,2-diacyl-sn-glycero-3-phosphoethanolamine = an N-acylsphing-4-enine 1-phosphoethanolamine + a 1,2-diacyl-sn-glycerol. It carries out the reaction an N-acylsphinganine + a 1,2-diacyl-sn-glycero-3-phosphoethanolamine = an N-acylsphinganine-1-phosphoethanolamine + a 1,2-diacyl-sn-glycerol. The catalysed reaction is an N-acyl-(4R)-4-hydroxysphinganine + a 1,2-diacyl-sn-glycero-3-phosphoethanolamine = an N-acyl-(4R)-4-hydroxysphinganine-1-phosphoethanolamine + a 1,2-diacyl-sn-glycerol. It catalyses the reaction 1,2-dihexadecanoyl-sn-glycero-3-phosphocholine + an N-acylsphing-4-enine = 1,2-dihexadecanoyl-sn-glycerol + a sphingomyelin. The enzyme catalyses 1-(9Z-octadecenoyl)-2-acyl-sn-3-glycerol + a sphingomyelin = a 1-(9Z-octadecenoyl)-2-acyl-sn-glycero-3-phosphocholine + an N-acylsphing-4-enine. It carries out the reaction N-hexadecanoylsphinganine + a 1,2-diacyl-sn-glycero-3-phosphocholine = N-hexadecanoyl-sphinganine-1-phosphocholine + a 1,2-diacyl-sn-glycerol. The catalysed reaction is N-hexadecanoyl-(4R)-hydroxysphinganine + a 1,2-diacyl-sn-glycero-3-phosphocholine = N-hexadecanoyl-(4R)-hydroxysphinganine-phosphocholine + a 1,2-diacyl-sn-glycerol. It catalyses the reaction N-hexadecanoylsphinganine + a 1,2-diacyl-sn-glycero-3-phosphoethanolamine = N-hexadecanoyl-sphinganine-1-phosphoethanolamine + a 1,2-diacyl-sn-glycerol. The enzyme catalyses N-hexadecanoyl-(4R)-hydroxysphinganine + a 1,2-diacyl-sn-glycero-3-phosphoethanolamine = N-hexadecanoyl-(4R)-hydroxysphinganine-1-phosphoethanolamine + a 1,2-diacyl-sn-glycerol. It functions in the pathway sphingolipid metabolism. Sphingomyelin synthase that primarily contributes to sphingomyelin synthesis and homeostasis at the plasma membrane. Catalyzes the reversible transfer of phosphocholine moiety in sphingomyelin biosynthesis: in the forward reaction transfers phosphocholine head group of phosphatidylcholine (PC) on to ceramide (CER) to form ceramide phosphocholine (sphingomyelin, SM) and diacylglycerol (DAG) as by-product, and in the reverse reaction transfers phosphocholine from SM to DAG to form PC and CER. The direction of the reaction appears to depend on the levels of CER and DAG in the plasma membrane. Does not use free phosphorylcholine or CDP-choline as donors. Can also transfer phosphoethanolamine head group of phosphatidylethanolamine (PE) on to ceramide (CER) to form ceramide phosphoethanolamine (CPE). Regulates receptor-mediated signal transduction via mitogenic DAG and proapoptotic CER, as well as via SM, a structural component of membrane rafts that serve as platforms for signal transduction and protein sorting. To a lesser extent, plays a role in secretory transport via regulation of DAG pool at the Golgi apparatus and its downstream effects on PRKD1. Required for normal bone matrix mineralization. This is Phosphatidylcholine:ceramide cholinephosphotransferase 2 (SGMS2) from Macaca fascicularis (Crab-eating macaque).